The chain runs to 444 residues: N-succinylarginine dihydrolase (444 aa).

Substrate is bound by residues 19-28 (SGLSVGNIAS), asparagine 110, and 137-138 (HR). Glutamate 174 is a catalytic residue. A substrate-binding site is contributed by arginine 214. Histidine 250 is a catalytic residue. Substrate contacts are provided by aspartate 252 and asparagine 362. Cysteine 368 acts as the Nucleophile in catalysis.

This sequence belongs to the succinylarginine dihydrolase family. As to quaternary structure, homodimer.

It catalyses the reaction N(2)-succinyl-L-arginine + 2 H2O + 2 H(+) = N(2)-succinyl-L-ornithine + 2 NH4(+) + CO2. It participates in amino-acid degradation; L-arginine degradation via AST pathway; L-glutamate and succinate from L-arginine: step 2/5. Its function is as follows. Catalyzes the hydrolysis of N(2)-succinylarginine into N(2)-succinylornithine, ammonia and CO(2). This chain is N-succinylarginine dihydrolase, found in Aliivibrio fischeri (strain ATCC 700601 / ES114) (Vibrio fischeri).